We begin with the raw amino-acid sequence, 732 residues long: Acylamino-acid-releasing enzyme (732 aa).

Met1 carries the N-acetylmethionine modification. At Ser187 the chain carries Phosphoserine. Residues Ser587, Asp675, and His707 each act as charge relay system in the active site.

Belongs to the peptidase S9C family. As to quaternary structure, homotetramer. As to expression, expressed in the liver (at protein level).

It localises to the cytoplasm. It catalyses the reaction Cleavage of an N-acetyl or N-formyl amino acid from the N-terminus of a polypeptide.. Its activity is regulated as follows. Homotetramerization is required for activity. Tetramerization results in the formation of a gated channel which is involved in substrate selection and substrate access to the catalytic sites. This enzyme catalyzes the hydrolysis of the N-terminal peptide bond of an N-acetylated peptide to generate an N-acetylated amino acid and a peptide with a free N-terminus. It preferentially cleaves off Ac-Ala, Ac-Met and Ac-Ser. Also, involved in the degradation of oxidized and glycated proteins. The sequence is that of Acylamino-acid-releasing enzyme (APEH) from Sus scrofa (Pig).